Here is a 116-residue protein sequence, read N- to C-terminus: Non-specific lipid-transfer protein 5 (116 aa).

The signal sequence occupies residues 1-24 (MARSMKLACVVLVMCMIVAPMAEG). Cystine bridges form between cysteine 28–cysteine 75, cysteine 38–cysteine 52, cysteine 53–cysteine 98, and cysteine 73–cysteine 112.

It belongs to the plant LTP family.

In terms of biological role, plant non-specific lipid-transfer proteins transfer phospholipids as well as galactolipids across membranes. May play a role in wax or cutin deposition in the cell walls of expanding epidermal cells and certain secretory tissues. This Lens culinaris (Lentil) protein is Non-specific lipid-transfer protein 5.